A 158-amino-acid chain; its full sequence is Peptide deformylase (158 aa).

Residues cysteine 88 and histidine 130 each contribute to the Fe cation site. The active site involves glutamate 131. Histidine 134 provides a ligand contact to Fe cation.

This sequence belongs to the polypeptide deformylase family. Fe(2+) is required as a cofactor.

The catalysed reaction is N-terminal N-formyl-L-methionyl-[peptide] + H2O = N-terminal L-methionyl-[peptide] + formate. Its function is as follows. Removes the formyl group from the N-terminal Met of newly synthesized proteins. Requires at least a dipeptide for an efficient rate of reaction. N-terminal L-methionine is a prerequisite for activity but the enzyme has broad specificity at other positions. The polypeptide is Peptide deformylase (Agathobacter rectalis (strain ATCC 33656 / DSM 3377 / JCM 17463 / KCTC 5835 / VPI 0990) (Eubacterium rectale)).